The chain runs to 318 residues: 2-dehydro-3-deoxygalactonokinase (318 aa).

Substrate-binding positions include 35–39 (GAESN), tyrosine 90, 105–107 (YDR), and arginine 169. ATP contacts are provided by residues 167–169 (NYR), 228–233 (TRGEDG), and 257–260 (GTGD). Substrate is bound by residues aspartate 260 and aspartate 296. Aspartate 260 acts as the Proton acceptor in catalysis.

The protein belongs to the carbohydrate kinase PfkB family. Homohexamer.

It carries out the reaction 2-dehydro-3-deoxy-D-galactonate + ATP = 2-dehydro-3-deoxy-6-phospho-D-galactonate + ADP + H(+). Functionally, involved in galactose catabolism. Catalyzes the phosphorylation of 2-keto-3-deoxygalactonate (KDGal) to produce 2-keto-3-deoxy-6-phosphogalactonate (KDPGal). Can also phosphorylate 2-keto-3-deoxygluconate (KDG) to 2-keto-3-deoxy-6-phosphogluconate (KDPG), but the catalytic efficiency for KDGal is 50-fold higher than for KDG. The polypeptide is 2-dehydro-3-deoxygalactonokinase (Haloferax volcanii (strain ATCC 29605 / DSM 3757 / JCM 8879 / NBRC 14742 / NCIMB 2012 / VKM B-1768 / DS2) (Halobacterium volcanii)).